Here is a 481-residue protein sequence, read N- to C-terminus: Aspartyl/glutamyl-tRNA(Asn/Gln) amidotransferase subunit B (481 aa).

The protein belongs to the GatB/GatE family. GatB subfamily. In terms of assembly, heterotrimer of A, B and C subunits.

The catalysed reaction is L-glutamyl-tRNA(Gln) + L-glutamine + ATP + H2O = L-glutaminyl-tRNA(Gln) + L-glutamate + ADP + phosphate + H(+). It carries out the reaction L-aspartyl-tRNA(Asn) + L-glutamine + ATP + H2O = L-asparaginyl-tRNA(Asn) + L-glutamate + ADP + phosphate + 2 H(+). Functionally, allows the formation of correctly charged Asn-tRNA(Asn) or Gln-tRNA(Gln) through the transamidation of misacylated Asp-tRNA(Asn) or Glu-tRNA(Gln) in organisms which lack either or both of asparaginyl-tRNA or glutaminyl-tRNA synthetases. The reaction takes place in the presence of glutamine and ATP through an activated phospho-Asp-tRNA(Asn) or phospho-Glu-tRNA(Gln). This chain is Aspartyl/glutamyl-tRNA(Asn/Gln) amidotransferase subunit B, found in Pseudomonas entomophila (strain L48).